We begin with the raw amino-acid sequence, 342 residues long: Flotillin-like protein FloA (342 aa).

2 helical membrane-spanning segments follow: residues 18-38 (FFIF…GKFI) and 39-59 (SLWF…IIGM).

This sequence belongs to the flotillin-like FloA family. Homooligomerizes.

The protein resides in the cell membrane. It localises to the membrane raft. Found in functional membrane microdomains (FMM) that may be equivalent to eukaryotic membrane rafts. FMMs are highly dynamic and increase in number as cells age. Flotillins are thought to be important factors in membrane fluidity. This chain is Flotillin-like protein FloA, found in Protochlamydia amoebophila (strain UWE25).